A 708-amino-acid chain; its full sequence is Exocyst complex component 5 (708 aa).

At Ala2 the chain carries N-acetylalanine. Positions 40–101 (KRLLEEFVNH…AFQHFQELDE (62 aa)) form a coiled coil. Thr122, Thr395, and Thr405 each carry phosphothreonine. The residue at position 412 (Ser412) is a Phosphoserine.

This sequence belongs to the SEC10 family. The exocyst complex is composed of EXOC1, EXOC2, EXOC3, EXOC4, EXOC5, EXOC6, EXOC7 and EXOC8. Interacts with EXOC3L1. As to expression, ubiquitous.

It localises to the cytoplasm. Its subcellular location is the midbody. Component of the exocyst complex involved in the docking of exocytic vesicles with fusion sites on the plasma membrane. The sequence is that of Exocyst complex component 5 (EXOC5) from Homo sapiens (Human).